The chain runs to 245 residues: Ribonuclease PH (245 aa).

Phosphate-binding positions include arginine 86 and 124–126; that span reads GTR.

It belongs to the RNase PH family. In terms of assembly, homohexameric ring arranged as a trimer of dimers.

It catalyses the reaction tRNA(n+1) + phosphate = tRNA(n) + a ribonucleoside 5'-diphosphate. Functionally, phosphorolytic 3'-5' exoribonuclease that plays an important role in tRNA 3'-end maturation. Removes nucleotide residues following the 3'-CCA terminus of tRNAs; can also add nucleotides to the ends of RNA molecules by using nucleoside diphosphates as substrates, but this may not be physiologically important. Probably plays a role in initiation of 16S rRNA degradation (leading to ribosome degradation) during starvation. The polypeptide is Ribonuclease PH (Bacillus cereus (strain B4264)).